Here is a 268-residue protein sequence, read N- to C-terminus: MSREREGFGEYYETVKKIKKDPAFETTTDHAVMGIRRHVAVPPGTTLNTVTPCAACKLLRRRCAEECPFSPYFSPHEPHKFAAVHKVFGASNVSKMLLEVGESQRGDAANSLVYEANLRLRDPIYGCMGAISALQHHIQSLQSELTTVRTEILRHKYQEATTITSLQNNFNSTTTTSSVSCDQHALASAILLPPPPPPPPTPRPPRLLSSQPAPPPTPPVSLPSPSMVVSSSSSSNSSATNSMYNPPPSSTAGYSNSLSSDNNVHYFD.

In terms of domain architecture, LOB spans 51 to 152; that stretch reads TPCAACKLLR…SELTTVRTEI (102 aa). The disordered stretch occupies residues 191–268; sequence LLPPPPPPPP…SSDNNVHYFD (78 aa). 2 stretches are compositionally biased toward pro residues: residues 192–205 and 212–222; these read LPPPPPPPPTPRPP and PAPPPTPPVSL. Residues 223 to 243 are compositionally biased toward low complexity; the sequence is PSPSMVVSSSSSSNSSATNSM. The segment covering 250–268 has biased composition (polar residues); that stretch reads STAGYSNSLSSDNNVHYFD.

This sequence belongs to the LOB domain-containing protein family. As to expression, expressed in shoots and roots and at low levels in flowers, but not in leaves or inflorescence stems.

In Arabidopsis thaliana (Mouse-ear cress), this protein is LOB domain-containing protein 13 (LBD13).